A 784-amino-acid polypeptide reads, in one-letter code: Toll-like receptor 2 (784 aa).

The first 20 residues, 1–20 (MPHTLWMVWVLGVIISLSKE), serve as a signal peptide directing secretion. The Extracellular segment spans residues 21–587 (ESSNQASLSC…VRLSVSECHR (567 aa)). Cysteines 30 and 36 form a disulfide. 19 LRR repeats span residues 54 to 77 (VKCL…RYVN), 78 to 101 (LQAL…SLGR), 102 to 125 (LEHL…PLSS), 126 to 150 (LKFL…HLTK), 151 to 175 (LRIL…GLTF), 176 to 199 (LEEL…SIQN), 200 to 223 (VSHL…LTSS), 224 to 250 (VECL…TNSL), 251 to 278 (IKKF…QISG), 279 to 308 (LLEL…DPGK), 309 to 337 (VETL…LTER), 338 to 361 (VKRI…HLKS), 362 to 388 (LEYL…AWPS), 389 to 414 (LQTL…TLKN), 415 to 437 (LTNL…WPEK), 438 to 457 (MKYL…CIPK), 458 to 478 (TLEI…NLPQ), 479 to 500 (LKEL…LLPM), and 501 to 524 (LLVL…SFHT). N114 carries an N-linked (GlcNAc...) asparagine glycan. N-linked (GlcNAc...) asparagine glycosylation occurs at N199. C353 and C382 form a disulfide bridge. N414 carries N-linked (GlcNAc...) asparagine glycosylation. An intrachain disulfide couples C432 to C454. The N-linked (GlcNAc...) asparagine glycan is linked to N442. One can recognise an LRRCT domain in the interval 525-579 (LKTLEAGGNNFICSCEFLSFTQEQQALAKVLVDWPANYLCDSPSHVRGQRVQDVR). A helical membrane pass occupies residues 588–608 (AALVSGMCCALFLLILLMGVL). The Cytoplasmic portion of the chain corresponds to 609 to 784 (CHRFHGLWYM…WVNLRAAIKS (176 aa)). The 144-residue stretch at 639 to 782 (ICYDAFVSYS…GFWVNLRAAI (144 aa)) folds into the TIR domain. Residue K754 forms a Glycyl lysine isopeptide (Lys-Gly) (interchain with G-Cter in ubiquitin) linkage. The ATG16L1-binding motif signature appears at 761 to 778 (YLEWPMDEARQEGFWVNL).

This sequence belongs to the Toll-like receptor family. In terms of assembly, interacts with LY96, TLR1 and TLR6 (via extracellular domain). TLR2 seems to exist in heterodimers with either TLR1 or TLR6 before stimulation by the ligand. The heterodimers form bigger oligomers in response to their corresponding ligands as well as further heterotypic associations with other receptors such as CD14 and/or CD36. Binds MYD88 (via TIR domain). Interacts with TICAM1. Interacts with CNPY3. Interacts with ATG16L1. Interacts with PPP1R11. Interacts with TICAM2. Interacts with TIRAP. Post-translationally, ubiquitinated at Lys-754 by PPP1R11, leading to its degradation. Deubiquitinated by USP2. Glycosylation of Asn-442 is critical for secretion of the N-terminal ectodomain of TLR2.

It is found in the membrane. The protein resides in the cytoplasmic vesicle. The protein localises to the phagosome membrane. It localises to the membrane raft. In terms of biological role, cooperates with LY96 to mediate the innate immune response to bacterial lipoproteins and other microbial cell wall components. Cooperates with TLR1 or TLR6 to mediate the innate immune response to bacterial lipoproteins or lipopeptides. Acts via MYD88 and TRAF6, leading to NF-kappa-B activation, cytokine secretion and the inflammatory response. May also promote apoptosis in response to lipoproteins. Forms activation clusters composed of several receptors depending on the ligand, these clusters trigger signaling from the cell surface and subsequently are targeted to the Golgi in a lipid-raft dependent pathway. Forms the cluster TLR2:TLR6:CD14:CD36 in response to diacylated lipopeptides and TLR2:TLR1:CD14 in response to triacylated lipopeptides. The protein is Toll-like receptor 2 (TLR2) of Macaca mulatta (Rhesus macaque).